We begin with the raw amino-acid sequence, 363 residues long: 3-methyl-D-ornithine--L-lysine ligase (363 aa).

Residue Lys-10 coordinates ATP. 11–12 is an L-lysine binding site; it reads LQ. ATP contacts are provided by residues Asp-31, 49-50, and 72-73; these read DV and EN. Glu-72 lines the L-lysine pocket. One can recognise an ATP-grasp domain in the interval 85 to 269; sequence EEFSCPVLFD…LIELLFRAFG (185 aa). ADP contacts are provided by residues Lys-104, Lys-131, Ser-138, and 160 to 163; that span reads EEYV. D-ornithine is bound by residues 169-171 and Asp-225; that span reads SLE. Mg(2+)-binding residues include Glu-227, Glu-239, and Asp-241. Position 239 (Glu-239) interacts with ADP. D-ornithine contacts are provided by residues 243–248 and Glu-302; that span reads RFPSQT. Ser-246 and Glu-302 together coordinate L-lysine.

It belongs to the PylC family. It depends on Mg(2+) as a cofactor.

The catalysed reaction is (3R)-3-methyl-D-ornithine + L-lysine + ATP = (3R)-3-methyl-D-ornithyl-N(6)-L-lysine + ADP + phosphate + H(+). It participates in amino-acid biosynthesis; L-pyrrolysine biosynthesis. Is required for the biosynthesis of pyrrolysine. Catalyzes the ATP-dependent ligation between (3R)-3-methyl-D-ornithine and L-lysine, leading to (3R)-3-methyl-D-ornithyl-N6-L-lysine. In Methanosarcina acetivorans (strain ATCC 35395 / DSM 2834 / JCM 12185 / C2A), this protein is 3-methyl-D-ornithine--L-lysine ligase.